Here is a 96-residue protein sequence, read N- to C-terminus: Putative defensin-like protein 236 (96 aa).

The first 23 residues, 1 to 23 (MKNATSLIIYCFLMFLLMNNVKG), serve as a signal peptide directing secretion. 4 cysteine pairs are disulfide-bonded: Cys-31–Cys-93, Cys-41–Cys-70, Cys-49–Cys-83, and Cys-68–Cys-85.

This sequence belongs to the DEFL family.

It localises to the secreted. The protein is Putative defensin-like protein 236 (SCRL20) of Arabidopsis thaliana (Mouse-ear cress).